The chain runs to 69 residues: uncharacterized protein (69 aa).

Helical transmembrane passes span 7 to 29 (LLSG…LGSI) and 44 to 66 (ALQV…LGLL).

It is found in the cell membrane. This is an uncharacterized protein from Archaeoglobus fulgidus (strain ATCC 49558 / DSM 4304 / JCM 9628 / NBRC 100126 / VC-16).